We begin with the raw amino-acid sequence, 465 residues long: NADH-quinone oxidoreductase subunit N (465 aa).

13 helical membrane-spanning segments follow: residues 9-29, 44-64, 73-93, 110-130, 159-179, 198-218, 235-255, 265-285, 292-312, 327-347, 371-391, 405-427, and 444-464; these read FNFV…VLLL, ASII…GFVL, LFVS…FSML, FLFM…IVIF, YFTL…FVYL, PILL…LSIA, FIAF…LRIF, EYIV…VALI, MLAY…VSSM, IFAL…IFLI, IMLA…IFWG, YALV…KILI, and VKQK…VFLL.

It belongs to the complex I subunit 2 family. In terms of assembly, NDH-1 is composed of 14 different subunits. Subunits NuoA, H, J, K, L, M, N constitute the membrane sector of the complex.

Its subcellular location is the cell inner membrane. The enzyme catalyses a quinone + NADH + 5 H(+)(in) = a quinol + NAD(+) + 4 H(+)(out). Functionally, NDH-1 shuttles electrons from NADH, via FMN and iron-sulfur (Fe-S) centers, to quinones in the respiratory chain. The immediate electron acceptor for the enzyme in this species is believed to be ubiquinone. Couples the redox reaction to proton translocation (for every two electrons transferred, four hydrogen ions are translocated across the cytoplasmic membrane), and thus conserves the redox energy in a proton gradient. This is NADH-quinone oxidoreductase subunit N from Campylobacter lari (strain RM2100 / D67 / ATCC BAA-1060).